The primary structure comprises 556 residues: MKTDIEIAQSVALKPIAEIVEQVGIGFDDIELYGKYKAKLSFDKIEAVRSQKVGKLILVTAINPTPAGEGKSTMSIGLADALNKIGKKTMIALREPSLGPVMGIKGGAAGGGYAQVLPMEDINLHFTGDMHAITTANNALSALLDNHIHQGNELDIDQRRVIWKRVVDLNDRALRQVIVGLGSPVNGIPREDGFDITVASEIMAILCLATDLSDLKKRLSNIVVAYSRDRKPIYVKDLKIEGALTLILKDAIKPNLVQTIYGTPALVHGGPFANIAHGCNSVLATSTALRLADYVVTEAGFGADLGAEKFLDIKTPNLPTSPDAIVIVATLRALKMHGGVSKEDLSQENVEAVKRGFTNLERHVNNMRQYGVPVVVAINQFTADTESEIATLKTLCSNIDVAVELASVWEDGADGGLELAQTVANVIETQSSNYKRLYNDADTIEEKIKKIVTKIYGGNKVHFGPKAQIQLKEFSDNGWDKMPICMAKTQYSFSDNPNLLGAPTDFDITVREFVPKTGAGFIVALTGDVLTMPGLPKKPAALNMDVLEDGTAIGLF.

65–72 is an ATP binding site; the sequence is TPAGEGKS.

It belongs to the formate--tetrahydrofolate ligase family.

It carries out the reaction (6S)-5,6,7,8-tetrahydrofolate + formate + ATP = (6R)-10-formyltetrahydrofolate + ADP + phosphate. It functions in the pathway one-carbon metabolism; tetrahydrofolate interconversion. The protein is Formate--tetrahydrofolate ligase of Streptococcus agalactiae serotype Ia (strain ATCC 27591 / A909 / CDC SS700).